A 527-amino-acid chain; its full sequence is Cytochrome b5 reductase 4 (527 aa).

The segment at 1-24 (MLNVPSQAFPAAGSQQRVAPAGQS) is disordered. One can recognise a Cytochrome b5 heme-binding domain in the interval 56 to 132 (LIEVTEDELK…LKECLVGRMA (77 aa)). Heme is bound by residues histidine 91 and histidine 114. Residues 138 to 171 (ALQAHTEKTESTHLNGLSAPPSLRPEPLSAPLPA) form a disordered region. Residues 173–264 (DHRPRYDWFQ…SVKEKWTQLG (92 aa)) enclose the CS domain. Positions 281–392 (LFYRECVLLS…GGPEGSFTLR (112 aa)) constitute an FAD-binding FR-type domain. FAD is bound by residues 372–387 (ANLP…GPEG) and 399–431 (HLYM…KMKL).

Belongs to the flavoprotein pyridine nucleotide cytochrome reductase family. FAD serves as cofactor.

It is found in the endoplasmic reticulum. It catalyses the reaction 2 Fe(III)-[cytochrome b5] + NADH = 2 Fe(II)-[cytochrome b5] + NAD(+) + H(+). Functionally, NADH-cytochrome b5 reductase involved in endoplasmic reticulum stress response pathway. The polypeptide is Cytochrome b5 reductase 4 (cyb5r4) (Danio rerio (Zebrafish)).